Reading from the N-terminus, the 761-residue chain is Elongation factor G, mitochondrial (761 aa).

Residues 1-42 (MSVQKMMRVPRKMVGGRIPFFTCSKVFSGFSRRSFHESPLAR) constitute a mitochondrion transit peptide. The region spanning 68-349 (NKLRNIGISA…AIVDYLPNPS (282 aa)) is the tr-type G domain. GTP-binding positions include 77–84 (AHIDSGKT), 148–152 (DTPGH), and 202–205 (NKMD).

This sequence belongs to the TRAFAC class translation factor GTPase superfamily. Classic translation factor GTPase family. EF-G/EF-2 subfamily. Post-translationally, the precursor is processed in two steps involving mitochondrial intermediate peptidase (MIP) and mitochondrial processing peptidase (MPP).

The protein localises to the mitochondrion. The protein operates within protein biosynthesis; polypeptide chain elongation. Functionally, mitochondrial GTPase that catalyzes the GTP-dependent ribosomal translocation step during translation elongation. During this step, the ribosome changes from the pre-translocational (PRE) to the post-translocational (POST) state as the newly formed A-site-bound peptidyl-tRNA and P-site-bound deacylated tRNA move to the P and E sites, respectively. Catalyzes the coordinated movement of the two tRNA molecules, the mRNA and conformational changes in the ribosome. The polypeptide is Elongation factor G, mitochondrial (Saccharomyces cerevisiae (strain YJM789) (Baker's yeast)).